Here is a 405-residue protein sequence, read N- to C-terminus: Argininosuccinate synthase (405 aa).

Residues 11–19 (AYSGGLDTS) and Ala-38 each bind ATP. L-citrulline is bound by residues Tyr-91 and Ser-96. Gly-121 contacts ATP. L-aspartate is bound by residues Thr-123, Asn-127, and Asp-128. Asn-127 serves as a coordination point for L-citrulline. L-citrulline-binding residues include Arg-131, Ser-182, Ser-191, Glu-267, and Tyr-279.

The protein belongs to the argininosuccinate synthase family. Type 1 subfamily. Homotetramer.

It localises to the cytoplasm. The enzyme catalyses L-citrulline + L-aspartate + ATP = 2-(N(omega)-L-arginino)succinate + AMP + diphosphate + H(+). It participates in amino-acid biosynthesis; L-arginine biosynthesis; L-arginine from L-ornithine and carbamoyl phosphate: step 2/3. This chain is Argininosuccinate synthase, found in Sphingopyxis alaskensis (strain DSM 13593 / LMG 18877 / RB2256) (Sphingomonas alaskensis).